Consider the following 291-residue polypeptide: Meteorin (291 aa).

An N-terminal signal peptide occupies residues 1-21 (MLVATLLCALCCGLLAASAHA). 5 disulfides stabilise this stretch: cysteine 28-cysteine 49, cysteine 80-cysteine 116, cysteine 169-cysteine 240, cysteine 172-cysteine 264, and cysteine 182-cysteine 286.

It belongs to the meteorin family. As to quaternary structure, monomer. Highly expressed in brain. Expressed in undifferentiated neural progenitors and in astrocyte lineage, particularly in Bergmann glia, a subtype of radial glia, and a few discrete neuronal populations residing in the superior colliculus, the ocular motor nucleus, the raphe and pontine nuclei, and in various thalamic nuclei. Weakly expressed in heart, kidney, skeletal muscle, spleen, testis, gut and lung.

The protein resides in the secreted. Involved in both glial cell differentiation and axonal network formation during neurogenesis. Promotes astrocyte differentiation and transforms cerebellar astrocytes into radial glia. Also induces axonal extension in small and intermediate neurons of sensory ganglia by activating nearby satellite glia. This is Meteorin (Metrn) from Mus musculus (Mouse).